The sequence spans 349 residues: 4-hydroxythreonine-4-phosphate dehydrogenase (349 aa).

Positions 141 and 142 each coordinate substrate. 3 residues coordinate a divalent metal cation: His176, His221, and His276. Residues Lys284, Asn293, and Arg302 each coordinate substrate.

Belongs to the PdxA family. Homodimer. The cofactor is Zn(2+). It depends on Mg(2+) as a cofactor. Requires Co(2+) as cofactor.

It is found in the cytoplasm. It carries out the reaction 4-(phosphooxy)-L-threonine + NAD(+) = 3-amino-2-oxopropyl phosphate + CO2 + NADH. It functions in the pathway cofactor biosynthesis; pyridoxine 5'-phosphate biosynthesis; pyridoxine 5'-phosphate from D-erythrose 4-phosphate: step 4/5. Catalyzes the NAD(P)-dependent oxidation of 4-(phosphooxy)-L-threonine (HTP) into 2-amino-3-oxo-4-(phosphooxy)butyric acid which spontaneously decarboxylates to form 3-amino-2-oxopropyl phosphate (AHAP). The protein is 4-hydroxythreonine-4-phosphate dehydrogenase of Methylorubrum extorquens (strain PA1) (Methylobacterium extorquens).